Reading from the N-terminus, the 299-residue chain is 4-hydroxybenzoate octaprenyltransferase (299 aa).

Helical transmembrane passes span 33–53, 56–76, 107–127, 151–171, 180–200, 214–234, 247–267, and 278–298; these read VGFL…AGGV, WWTL…GCVI, LLMF…MNQL, LPQV…FAAI, WLLY…CAMV, AILF…LMLF, HTYW…FIIA, and AFMH…LATT.

The protein belongs to the UbiA prenyltransferase family. The cofactor is Mg(2+).

The protein localises to the cell inner membrane. It carries out the reaction all-trans-octaprenyl diphosphate + 4-hydroxybenzoate = 4-hydroxy-3-(all-trans-octaprenyl)benzoate + diphosphate. Its pathway is cofactor biosynthesis; ubiquinone biosynthesis. Catalyzes the prenylation of para-hydroxybenzoate (PHB) with an all-trans polyprenyl group. Mediates the second step in the final reaction sequence of ubiquinone-8 (UQ-8) biosynthesis, which is the condensation of the polyisoprenoid side chain with PHB, generating the first membrane-bound Q intermediate 3-octaprenyl-4-hydroxybenzoate. This Xylella fastidiosa (strain 9a5c) protein is 4-hydroxybenzoate octaprenyltransferase.